The primary structure comprises 338 residues: Phosphatidylglycerol--prolipoprotein diacylglyceryl transferase (338 aa).

4 consecutive transmembrane segments (helical) span residues 24–44 (WYGLMYLVAFGIAYFLFSYQV), 67–87 (LFIWGILGLILGARIFGTLVY), 115–135 (GFQGMSYHGGFIGGFLGVILW), and 141–161 (FKFAAVADLMAVSIPLGYTFG). Arg162 contacts a 1,2-diacyl-sn-glycero-3-phospho-(1'-sn-glycerol). 3 helical membrane passes run 224–244 (PSQLYEAFFEGIILWLILWLL), 252–272 (GFLVCVYTLGYGFFRFFIEYF), and 304–324 (GQILCSLMILASLAAMLILYL).

It belongs to the Lgt family.

It localises to the cell inner membrane. The catalysed reaction is L-cysteinyl-[prolipoprotein] + a 1,2-diacyl-sn-glycero-3-phospho-(1'-sn-glycerol) = an S-1,2-diacyl-sn-glyceryl-L-cysteinyl-[prolipoprotein] + sn-glycerol 1-phosphate + H(+). It participates in protein modification; lipoprotein biosynthesis (diacylglyceryl transfer). Catalyzes the transfer of the diacylglyceryl group from phosphatidylglycerol to the sulfhydryl group of the N-terminal cysteine of a prolipoprotein, the first step in the formation of mature lipoproteins. The protein is Phosphatidylglycerol--prolipoprotein diacylglyceryl transferase of Treponema denticola (strain ATCC 35405 / DSM 14222 / CIP 103919 / JCM 8153 / KCTC 15104).